The chain runs to 367 residues: Aspartate beta-hydroxylase domain-containing protein 1 (367 aa).

The segment at 1 to 27 is disordered; it reads MWRGSSAGGSQGAAMEGTGGELGGQGN. The Cytoplasmic portion of the chain corresponds to 1–49; that stretch reads MWRGSSAGGSQGAAMEGTGGELGGQGNWGLEDAPGLLARASLPIMPAWP. Residues 50 to 72 traverse the membrane as a helical segment; the sequence is LPLASSALTLLLGALTSLFLWYC. Over 73-367 the chain is Lumenal; that stretch reads YRLGSQDMQA…ALDFVFAPDP (295 aa). The interval 88 to 122 is disordered; the sequence is RAGAVGGRPGGCSEAGRPSPGRSGESGEGPRTEGL. S106 bears the Phosphoserine mark.

This sequence belongs to the aspartyl/asparaginyl beta-hydroxylase family.

The protein resides in the membrane. The chain is Aspartate beta-hydroxylase domain-containing protein 1 (ASPHD1) from Bos taurus (Bovine).